The following is a 548-amino-acid chain: Putative ATP-dependent RNA helicase R290 (548 aa).

Positions 38-206 constitute a Helicase ATP-binding domain; that stretch reads INKVINGEDV…CKVLQLKTNE (169 aa). Residue 51–58 participates in ATP binding; sequence LMTSAGKS. The DEAH box motif lies at 150–153; that stretch reads DEAH. In terms of domain architecture, Helicase C-terminal spans 231 to 376; sequence DIVPIINKYP…KTQLALLEQM (146 aa).

This sequence belongs to the DEAD box helicase family. DEAH subfamily.

It catalyses the reaction ATP + H2O = ADP + phosphate + H(+). This chain is Putative ATP-dependent RNA helicase R290, found in Acanthamoeba polyphaga mimivirus (APMV).